Consider the following 201-residue polypeptide: Glycerol-3-phosphate acyltransferase (201 aa).

Transmembrane regions (helical) follow at residues 3-23, 53-73, 80-100, 115-135, and 153-175; these read LFAI…SAIL, WVAL…VWLG, HFEL…PIFF, IAPI…LIFF, and FYVW…LLIY.

This sequence belongs to the PlsY family. Probably interacts with PlsX.

It is found in the cell inner membrane. The catalysed reaction is an acyl phosphate + sn-glycerol 3-phosphate = a 1-acyl-sn-glycero-3-phosphate + phosphate. It participates in lipid metabolism; phospholipid metabolism. Catalyzes the transfer of an acyl group from acyl-phosphate (acyl-PO(4)) to glycerol-3-phosphate (G3P) to form lysophosphatidic acid (LPA). This enzyme utilizes acyl-phosphate as fatty acyl donor, but not acyl-CoA or acyl-ACP. In Pasteurella multocida (strain Pm70), this protein is Glycerol-3-phosphate acyltransferase.